The primary structure comprises 892 residues: MKTAEIRRRYLAHFEANGHAVVPSAPLPAISDPNLLFVAAGMMQFVPYFLGQQTAPYKRAVSVQKCLRTPDIDEVGKTSRHGTFFQMNGNFSFGDYFKDEAIPLAWELSTKPVDAGGLGLDPDRIWPTVYLDDDEAFQIWRSVGVPADRIVRRGKADNFWSMGIPGPCGPCSELFYDRGPEYGREGGPEVDEDRYLEFWNLVFMQFERGPGTGKEDYPILGDLPAKNIDTGMGLERMASILQGVDNLYEIDEVRPILAKAAELTGKRYGAHSGQVASESHPDDVRLRVVADHVRTALMLIGDGVIPSNEGRGYVLRRIMRRAIRSIRLLGWQERAMPELLPVARDCMSASYPELATDFGRIADYAYAEEDAFLSTLRAGTTILDTAIAETRTAGRRAISGAKAFQLHDTYGFPIDLTLEIASEQGLQVDAEGFRRLMADQRARAKADAQARKTGHVDLSAYRTVLDEGGPVTFTGYQEVSRESTVRAVLGAASPHAAAVEGETVELVLDTTPFYAEGGGQQPDLGVITVGGGQVEVLDVQQPVPGLIVHRARVLRGEVRVGETGFAEIDTDRRRAISRSHTATHLVHQTMRNFLGESATQAGSLNAPGRLRFDFNTPTGVAPSVLRDVEQQVNEALLADLEVRAFVTSLAEARRIGAMALFGEKYGEQVRVVEVGDYARELCGGTHVGRSGQLGLVKILSESSIGSGVRRVEALVGIDAFNFLAREHLLVARLAELYRVPSDQVAERVEQTVTQLRDAEKELEKLRAQLVLGGAAALAAQASEVRGVAYVGTEAPEGAAGNDVRTLAQEIRSRIDPARPAVVAVAARANGKASLVVAVNPAARSQGLSAADLVKVAFAGRGGGSPELAQGGGLPAAEAPGLLRTVENAIAGA.

Zn(2+) is bound by residues His-580, His-584, Cys-682, and His-686.

Belongs to the class-II aminoacyl-tRNA synthetase family. Zn(2+) serves as cofactor.

The protein resides in the cytoplasm. The enzyme catalyses tRNA(Ala) + L-alanine + ATP = L-alanyl-tRNA(Ala) + AMP + diphosphate. Its function is as follows. Catalyzes the attachment of alanine to tRNA(Ala) in a two-step reaction: alanine is first activated by ATP to form Ala-AMP and then transferred to the acceptor end of tRNA(Ala). Also edits incorrectly charged Ser-tRNA(Ala) and Gly-tRNA(Ala) via its editing domain. This is Alanine--tRNA ligase from Salinispora tropica (strain ATCC BAA-916 / DSM 44818 / JCM 13857 / NBRC 105044 / CNB-440).